A 345-amino-acid chain; its full sequence is D-fructose 1,6-bisphosphatase class 2/sedoheptulose 1,7-bisphosphatase (345 aa).

Mn(2+) is bound by residues aspartate 33, glutamate 57, aspartate 97, and glutamate 100. Substrate contacts are provided by residues 100–102, tyrosine 131, 176–178, and 198–200; these read EGT, RPR, and DGD. Residue glutamate 225 participates in Mn(2+) binding.

The protein belongs to the FBPase class 2 family. As to quaternary structure, homotetramer. It depends on Mn(2+) as a cofactor.

The catalysed reaction is beta-D-fructose 1,6-bisphosphate + H2O = beta-D-fructose 6-phosphate + phosphate. The enzyme catalyses D-sedoheptulose 1,7-bisphosphate + H2O = D-sedoheptulose 7-phosphate + phosphate. It participates in carbohydrate biosynthesis; Calvin cycle. In terms of biological role, catalyzes the hydrolysis of fructose 1,6-bisphosphate (Fru 1,6-P2) and sedoheptulose 1,7-bisphosphate (Sed 1,7-P2) to fructose 6-phosphate and sedoheptulose 7-phosphate, respectively. This chain is D-fructose 1,6-bisphosphatase class 2/sedoheptulose 1,7-bisphosphatase, found in Trichodesmium erythraeum (strain IMS101).